The sequence spans 402 residues: LIM homeobox transcription factor 1-beta (402 aa).

LIM zinc-binding domains are found at residues Cys-56–Asp-106 and Cys-115–Asp-168. Disordered regions lie at residues Leu-176–Gln-229 and Pro-326–His-346. Residues Pro-219–Ala-278 constitute a DNA-binding region (homeobox). Residues Pro-326 to Thr-338 show a composition bias toward polar residues.

As to quaternary structure, interacts with DHX9. Expressed in most tissues. Highest levels in testis, thyroid, duodenum, skeletal muscle, and pancreatic islets.

The protein resides in the nucleus. Transcription factor involved in the regulation of podocyte-expressed genes. Essential for the specification of dorsal limb fate at both the zeugopodal and autopodal levels. The protein is LIM homeobox transcription factor 1-beta (LMX1B) of Homo sapiens (Human).